We begin with the raw amino-acid sequence, 296 residues long: QAAPDEGRASGHKLTVYWGAEDDTTTLDDVCNDSSYDVVNLAFLSHFFSAGGYPKMSIGNLDGPSQAQKKAGATGLQDGSSLVKSIKNCQSKGKPVILSMGGATDYSDVQLNSDAQGQQIANTVWNLFLGGTDHKELRPFGDVKLDGVDLDNETNDGTGYLAMTKQFKANFQKDTSKKYYITAAPQCPYPDQSEPLDVCQLLDWVQVQFYNNGNCNIAQRGFAKAVKNWSKGIGSGVQLYIGALASGADGDEGYVHAATLNRAVNQVKAMNLPNFGGAMLWEAHSAVKNGQLPEED.

The 285-residue stretch at 12-296 folds into the GH18 domain; that stretch reads HKLTVYWGAE…VKNGQLPEED (285 aa). N-linked (GlcNAc...) asparagine glycosylation is found at asparagine 32 and asparagine 152. Catalysis depends on glutamate 153, which acts as the Proton donor. Asparagine 228 carries N-linked (GlcNAc...) asparagine glycosylation.

The protein belongs to the glycosyl hydrolase 18 family. Chitinase class III subfamily.

It is found in the secreted. The enzyme catalyses Random endo-hydrolysis of N-acetyl-beta-D-glucosaminide (1-&gt;4)-beta-linkages in chitin and chitodextrins.. Secreted chitinase involved in the degradation of chitin, a component of the cell walls of fungi and exoskeletal elements of some animals (including worms and arthropods). Participates in the infection process and directly acts in the penetration process of the host cuticle. Involved in heat-shock adaptation. The sequence is that of Endochitinase 3 (chi3) from Metarhizium anisopliae (Entomophthora anisopliae).